The following is a 373-amino-acid chain: Diels-Alderase (373 aa).

Belongs to the Diels-Alderase family.

The enzyme catalyses (5S)-3-[(2E,6R,8E,10E,12E)-2,6-dimethyltetradeca-2,8,10,12-tetraenoyl]-5-(hydroxymethyl)pyrrolidine-2,4-dione = trichosetin. It functions in the pathway mycotoxin biosynthesis. Hybrid PKS-NRPS synthetase; part of the gene cluster that mediates the biosynthesis of trichosetin, a trans-fused decalin-containing tetramic acid with antimicrobial activity. The PKS module of PKS-NRPS1 together with the enoylreductase (ER) catalyze the formation of the polyketide unit which is then conjugated to L-serine by the condensation domain of the PKS-NRPS1 NRPS module. Activity of the Dieckmann cyclase domain (RED) results in release of the Dieckmann product intermediate. Diels-Alderase (DA) is involved in endo-selective Diels-Alder cycloaddition to form the decalin ring, leading to the production of N-desmethylequisetin also called trichosetin. The cluster does not contain the equisetin N-methyltransferase and consequently, trichosetin is isolated as final product. The polypeptide is Diels-Alderase (Gibberella fujikuroi (strain CBS 195.34 / IMI 58289 / NRRL A-6831) (Bakanae and foot rot disease fungus)).